A 218-amino-acid chain; its full sequence is MIESITGYLFGIVPFGDIVFGFSEFSIIGFITAVIFTIIVYLTKPEKQLEAQKFKIEDKLEVVTLNELKIRRMMAIVCGIATAGAMLTYDLFDYALFLTLVGIANIGIVSAVKREWVLNASYQYGLIAMIATLPLFGSAGMILAKTGTLSIFELPKIQTSLLFEKIIFAAGMAGETGIAPFYAAKAEMFRAPGSPYILMIHLSSLLLIVRTVEILLTI.

A run of 5 helical transmembrane segments spans residues 19–39 (VFGFSEFSIIGFITAVIFTII), 92–112 (FDYALFLTLVGIANIGIVSAV), 124–144 (YGLIAMIATLPLFGSAGMILA), 161–181 (LLFEKIIFAAGMAGETGIAPF), and 196–216 (YILMIHLSSLLLIVRTVEILL).

The protein localises to the cell membrane. This is an uncharacterized protein from Methanocaldococcus jannaschii (strain ATCC 43067 / DSM 2661 / JAL-1 / JCM 10045 / NBRC 100440) (Methanococcus jannaschii).